Here is a 557-residue protein sequence, read N- to C-terminus: Nucleolin 1 (557 aa).

3 disordered regions span residues 1–297 (MGKS…GGSK), 376–398 (GERG…GDGG), and 474–557 (LVVD…FGDE). The span at 49–63 (QKEKAVKKVPKKVES) shows a compositional bias: basic and acidic residues. Acidic residues-rich tracts occupy residues 64–74 (SDDSDSESEEE), 91–101 (ESSDDSSSDDE), and 124–135 (SSSDDDSSDEEV). The span at 174 to 184 (AKIAKPAAKDS) shows a compositional bias: low complexity. Residues 186–197 (SSDDDSDEDSED) show a composition bias toward acidic residues. Low complexity predominate over residues 203–217 (KKAAPAAAKAASSSD). Acidic residues predominate over residues 218–229 (SSDEDSDEESED). Residues 230–247 (EKPAQKKADTKASKKSSS) are compositionally biased toward basic and acidic residues. Acidic residues predominate over residues 249-263 (ESSESEEDESEDEEE). Residues 264–281 (TPKKKSSDVEMVDAEKSS) are compositionally biased toward basic and acidic residues. Residues 297 to 374 (KTLFAANLSF…REIRLDIAQE (78 aa)) enclose the RRM 1 domain. Positions 401–481 (KKIFVKGFDA…FYLVVDEPRP (81 aa)) constitute an RRM 2 domain. Over residues 485-503 (SSGGGGFGRGNGRFGSGGG) the composition is skewed to gly residues.

As to quaternary structure, interacts with THAL in the nucleus. In terms of tissue distribution, expressed in roots, leaves, shoots and flowers.

Its subcellular location is the nucleus. The protein localises to the nucleolus. In terms of biological role, involved in pre-rRNA processing and ribosome assembly. Is associated with intranucleolar chromatin and pre-ribosomal particles and plays a role in controlling activation and repression of a specific subset of rRNA genes located in distinctive nucleolar organizer regions. Binds specifically rDNA chromatin and may be required to maintain rDNA chromatin structure, but is probably not required for the overall histone methylation status of 45S rRNA genes. Involved in leaf polarity establishment by functioning cooperatively with AS1 to repress abaxial genes ARF3, ARF4, KAN1, KAN2, YAB1 and YAB5, and the knox homeobox genes KNAT1, KNAT2, KNAT6, and STM to promote adaxial development in leaf primordia at shoot apical meristems at high temperatures. The sequence is that of Nucleolin 1 from Arabidopsis thaliana (Mouse-ear cress).